The following is a 106-amino-acid chain: ELLKTVRVIKFLYQSNPPPRPEGTRQARRNRRRRWRARQRQIQSLSGWILSTFLGRSAEPVPLQLPPLERLTLDCNEDCGTSGTQGVGSPQILVESPTVLESGTKE.

The homomultimerization stretch occupies residues 8-16 (VIKFLYQSN). A disordered region spans residues 13-36 (YQSNPPPRPEGTRQARRNRRRRWR). The short motif at 24-40 (TRQARRNRRRRWRARQR) is the Nuclear localization signal and RNA-binding (RRE) element. The span at 26–36 (QARRNRRRRWR) shows a compositional bias: basic residues. Positions 63–74 (LQLPPLERLTLD) match the Nuclear export signal and binding to XPO1 motif. Residues serine 82 and serine 89 each carry the phosphoserine; by host modification.

Belongs to the HIV-1 REV protein family. As to quaternary structure, homomultimer; when bound to the RRE. Multimeric assembly is essential for activity and may involve XPO1. Binds to human KPNB1, XPO1, TNPO1, RANBP5 and IPO7. Interacts with the viral Integrase. Interacts with human KHDRBS1. Interacts with human NAP1; this interaction decreases Rev multimerization and stimulates its activity. Interacts with human DEAD-box helicases DDX3 and DDX24; these interactions may serve for viral RNA export to the cytoplasm and packaging, respectively. Interacts with human PSIP1; this interaction may inhibit HIV-1 DNA integration by promoting dissociation of the Integrase-LEDGF/p75 complex. Post-translationally, asymmetrically arginine dimethylated at one site by host PRMT6. Methylation impairs the RNA-binding activity and export of viral RNA from the nucleus to the cytoplasm. In terms of processing, phosphorylated by protein kinase CK2. Presence of, and maybe binding to the N-terminus of the regulatory beta subunit of CK2 is necessary for CK2-mediated Rev's phosphorylation.

It localises to the host nucleus. The protein resides in the host nucleolus. The protein localises to the host cytoplasm. Escorts unspliced or incompletely spliced viral pre-mRNAs (late transcripts) out of the nucleus of infected cells. These pre-mRNAs carry a recognition sequence called Rev responsive element (RRE) located in the env gene, that is not present in fully spliced viral mRNAs (early transcripts). This function is essential since most viral proteins are translated from unspliced or partially spliced pre-mRNAs which cannot exit the nucleus by the pathway used by fully processed cellular mRNAs. Rev itself is translated from a fully spliced mRNA that readily exits the nucleus. Rev's nuclear localization signal (NLS) binds directly to KPNB1/Importin beta-1 without previous binding to KPNA1/Importin alpha-1. KPNB1 binds to the GDP bound form of RAN (Ran-GDP) and targets Rev to the nucleus. In the nucleus, the conversion from Ran-GDP to Ran-GTP dissociates Rev from KPNB1 and allows Rev's binding to the RRE in viral pre-mRNAs. Rev multimerization on the RRE via cooperative assembly exposes its nuclear export signal (NES) to the surface. Rev can then form a complex with XPO1/CRM1 and Ran-GTP, leading to nuclear export of the complex. Conversion from Ran-GTP to Ran-GDP mediates dissociation of the Rev/RRE/XPO1/RAN complex, so that Rev can return to the nucleus for a subsequent round of export. Beside KPNB1, also seems to interact with TNPO1/Transportin-1, RANBP5/IPO5 and IPO7/RANBP7 for nuclear import. The nucleoporin-like HRB/RIP is an essential cofactor that probably indirectly interacts with Rev to release HIV RNAs from the perinuclear region to the cytoplasm. The sequence is that of Protein Rev from Homo sapiens (Human).